A 262-amino-acid chain; its full sequence is Probable carboxylesterase Culp3 (262 aa).

The signal sequence occupies residues 1 to 41; sequence MNNRPIRLLTSGRAGLGAGALITAVVLLIALGAVWTLVAFA. Cys44 and Cys114 form a disulfide bridge. The active-site Nucleophile is Ser125. Cys188 and Cys195 are oxidised to a cystine. Asp192 is an active-site residue. Residue His206 is the Proton donor/acceptor of the active site. A disordered region spans residues 241–262; that stretch reads LPGSVLQMPGTAAPAPESLHGR.

Belongs to the cutinase family.

It localises to the secreted. This is Probable carboxylesterase Culp3 (cut3) from Mycobacterium tuberculosis (strain CDC 1551 / Oshkosh).